Here is a 1017-residue protein sequence, read N- to C-terminus: Protein HIRA (1017 aa).

2 WD repeats span residues 11 to 53 (HNGK…QEDD) and 68 to 107 (NHLA…GPST). Phosphoserine is present on serine 111. 5 WD repeats span residues 129–168 (NHSG…EILA), 172–211 (GHSG…LETS), 220–263 (GGTT…TNMD), 266–322 (GHRK…PLVV), and 326–367 (LFDK…DPLS). The tract at residues 421–479 (REMGSATSVAGVVNGESLEDIRKNLLKKQVETRTADGRRRITPLCIAQLDTGDFSTAFF) is interaction with ASF1A. The interval 421 to 729 (REMGSATSVA…RLKCNREGKE (309 aa)) is interaction with CCNA1. The required for repression of histone gene transcription stretch occupies residues 439–475 (EDIRKNLLKKQVETRTADGRRRITPLCIAQLDTGDFS). The segment covering 494–509 (SSHSSPQLLPLDSSTP) has biased composition (low complexity). The tract at residues 494–555 (SSHSSPQLLP…AALSPSVLTT (62 aa)) is disordered. Positions 536–555 (KDSMNATSTPAALSPSVLTT) are enriched in polar residues. Phosphoserine is present on serine 549. At threonine 555 the chain carries Phosphothreonine; by CDK2. Serine 557 bears the Phosphoserine mark. 2 disordered regions span residues 570-589 (TERS…TPTA) and 604-625 (PRDL…KASS). Residue threonine 576 is modified to Phosphothreonine. Serine 584 is subject to Phosphoserine. Threonine 586 carries the phosphothreonine modification. The tract at residues 593-826 (LKEQNLVKEL…LAGSDMTVSQ (234 aa)) is interaction with histone H2B. Interaction with PAX3 stretches follow at residues 594–739 (KEQN…SRIL) and 740–828 (TAAG…SQIL). Residues 604–619 (PRDLLESSSDSDEKVP) are compositionally biased toward basic and acidic residues. Residues serine 610, serine 611, serine 612, serine 614, serine 661, serine 675, and serine 687 each carry the phosphoserine modification. Residues 738–1017 (ILTAAGSCDV…QEQLDILRDK (280 aa)) form an interaction with histone H4 region.

Belongs to the WD repeat HIR1 family. Interacts with histone H3-3B, PAX3 and PAX7. Interacts with histone H3.Y. Interacts with CCNA1, HIRIP3, NFU1/HIRIP5 and histone H2B. Part of a complex which includes ASF1A, CABIN1, histone H3.3, histone H4 and UBN1. Sumoylated. In terms of processing, phosphorylated by CDK2/CCNA1 and CDK2/CCNE1 on Thr-555 in vitro. Also phosphorylated on Thr-555 and Ser-687 in vivo. Expressed at high levels in kidney, pancreas and skeletal muscle and at lower levels in brain, heart, liver, lung, and placenta.

The protein resides in the nucleus. The protein localises to the PML body. Its function is as follows. Cooperates with ASF1A to promote replication-independent chromatin assembly. Required for the periodic repression of histone gene transcription during the cell cycle. Required for the formation of senescence-associated heterochromatin foci (SAHF) and efficient senescence-associated cell cycle exit. This Homo sapiens (Human) protein is Protein HIRA (HIRA).